The chain runs to 504 residues: Maturase K (504 aa).

It belongs to the intron maturase 2 family. MatK subfamily.

It is found in the plastid. The protein resides in the chloroplast. Functionally, usually encoded in the trnK tRNA gene intron. Probably assists in splicing its own and other chloroplast group II introns. The chain is Maturase K from Calyptranthes pallens (Spicewood).